We begin with the raw amino-acid sequence, 253 residues long: NAD-dependent protein deacetylase (253 aa).

The Deacetylase sirtuin-type domain occupies 3 to 253; the sequence is APSLSSGVEQ…GETLGPFVGN (251 aa). Positions 29, 33, 40, 41, 106, 108, 109, and 126 each coordinate NAD(+). Nicotinamide is bound at residue phenylalanine 40. Nicotinamide contacts are provided by isoleucine 108 and aspartate 109. Residue histidine 126 is the Proton acceptor of the active site. Cysteine 134, cysteine 137, cysteine 159, and cysteine 162 together coordinate Zn(2+). Residues serine 200, serine 201, asparagine 225, aspartate 242, and isoleucine 243 each contribute to the NAD(+) site.

This sequence belongs to the sirtuin family. Class U subfamily. Zn(2+) serves as cofactor.

It is found in the cytoplasm. It catalyses the reaction N(6)-acetyl-L-lysyl-[protein] + NAD(+) + H2O = 2''-O-acetyl-ADP-D-ribose + nicotinamide + L-lysyl-[protein]. Functionally, NAD-dependent protein deacetylase which modulates the activities of several enzymes which are inactive in their acetylated form. This Rhodopseudomonas palustris (strain ATCC BAA-98 / CGA009) protein is NAD-dependent protein deacetylase.